Consider the following 617-residue polypeptide: E3 ubiquitin-protein ligase ORTHRUS 1 (617 aa).

Residues 12 to 62 (DGVCMRCQVNPPSEETLTCGTCVTPWHVPCLLPESLASSTGEWECPDCSGV) form a PHD-type zinc finger. The segment at 129-169 (CSICIQLPERPITTPCGHNFCLKCFEKWAVGQGKLTCMICR) adopts an RING-type 1 zinc-finger fold. The YDG domain occupies 258 to 407 (TRKQGVLVGE…FKVCRYLFVR (150 aa)). The RING-type 2 zinc finger occupies 495–552 (CQICREVLSLPVTTPCAHNFCKACLEAKFAGITQLRERSNGGRKLRAKKNIMTCPCCT). Residues 563 to 593 (QVNREMMEIIENFKKSEEEADASISEEEEEE) adopt a coiled-coil conformation. A disordered region spans residues 575 to 617 (FKKSEEEADASISEEEEEESEPPTKKIKMDNNSVGGSGTSLSA). Positions 580–595 (EEADASISEEEEEESE) are enriched in acidic residues. Positions 604–617 (DNNSVGGSGTSLSA) are enriched in polar residues.

Expressed in inflorescences and leaves.

The protein localises to the nucleus. It catalyses the reaction S-ubiquitinyl-[E2 ubiquitin-conjugating enzyme]-L-cysteine + [acceptor protein]-L-lysine = [E2 ubiquitin-conjugating enzyme]-L-cysteine + N(6)-ubiquitinyl-[acceptor protein]-L-lysine.. It functions in the pathway protein modification; protein ubiquitination. In terms of biological role, E3 ubiquitin-protein ligase. Participates in CpG methylation-dependent transcriptional regulation and epigenetic transcriptional silencing. Mediates ubiquitination with the E2 ubiquitin-conjugating enzymes UBC11, UBC8 and UBC8 homologs (e.g. UBC10, UBC11, UBC28 and UBC29) but not with UBC27, UBC30, UBC32, UBC34 and UBC36. Promotes methylation-mediated gene silencing leading, for example, to early flowering. Can bind to CpG, CpNpG, and CpNpN DNA motifs, with a strong preference for methylated forms, and with highest affinity for CpG substrate. In Arabidopsis thaliana (Mouse-ear cress), this protein is E3 ubiquitin-protein ligase ORTHRUS 1 (ORTH1).